The following is a 708-amino-acid chain: Elongation factor G (708 aa).

In terms of domain architecture, tr-type G spans 8–290; it reads KRYRNIGISA…AVIQYLPAPM (283 aa). GTP-binding positions include 17–24, 88–92, and 142–145; these read AHIDAGKT, DTPGH, and NKMD.

It belongs to the TRAFAC class translation factor GTPase superfamily. Classic translation factor GTPase family. EF-G/EF-2 subfamily.

Its subcellular location is the cytoplasm. In terms of biological role, catalyzes the GTP-dependent ribosomal translocation step during translation elongation. During this step, the ribosome changes from the pre-translocational (PRE) to the post-translocational (POST) state as the newly formed A-site-bound peptidyl-tRNA and P-site-bound deacylated tRNA move to the P and E sites, respectively. Catalyzes the coordinated movement of the two tRNA molecules, the mRNA and conformational changes in the ribosome. In Psychrobacter arcticus (strain DSM 17307 / VKM B-2377 / 273-4), this protein is Elongation factor G.